Reading from the N-terminus, the 339-residue chain is Fructose-1,6-bisphosphatase, cytosolic (339 aa).

E70, E99, D120, L122, and D123 together coordinate Mg(2+). Substrate-binding positions include 123 to 126 (DGSS), N214, Y246, Y266, and K276. E282 is a Mg(2+) binding site.

Belongs to the FBPase class 1 family. Mg(2+) serves as cofactor.

Its subcellular location is the cytoplasm. It carries out the reaction beta-D-fructose 1,6-bisphosphate + H2O = beta-D-fructose 6-phosphate + phosphate. The chain is Fructose-1,6-bisphosphatase, cytosolic from Brassica napus (Rape).